A 1518-amino-acid polypeptide reads, in one-letter code: Putative cellulose synthase 2 (1518 aa).

The tract at residues 1-731 (MYGTWFTTGK…EEKLEKQSFV (731 aa)) is catalytic. Helical transmembrane passes span 24–44 (PVWVPVVLGVVLMAFVGSVRI), 71–91 (ITVFLMMLSLLVSLRYIVWRL), and 105–125 (LAVLLLLAEAYALMTLCLSYF). The segment at 144–237 (QWPSVDVFVP…FAVIFDCDHV (94 aa)) is catalytic subdomain A. D186 is an active-site residue. Residues D233 and D235 each coordinate substrate. Residues 314 to 374 (EAVMGIGGFA…GQRVRWARGM (61 aa)) are catalytic subdomain B. D330 is an active-site residue. The next 5 membrane-spanning stretches (helical) occupy residues 404–424 (FLFAIPRLTFLVSPLAFLFLG), 427–447 (IIAASPLAISVYALPHIFHSV), 465–485 (IYETSLALFLVRITIVTLLQP), 514–534 (ILAGVLCAALLRGVFGIVWQF), and 543–563 (FILNTLWVVISLIIVLASIAV). Residues 569–668 (QTRNAPRVSV…ERQVVSMVFG (100 aa)) form the PilZ domain. Positions 732-1518 (LKPVPRSARH…IARDDLTGEL (787 aa)) are cyclic di-GMP binding domain. Positions 765 to 785 (APSPDQSGVTAETPFGDSNTG) are disordered. Residues 768–785 (PDQSGVTAETPFGDSNTG) show a composition bias toward polar residues. Residues 1481–1501 (ALYLAGLAGAGLAALGVWAWL) form a helical membrane-spanning segment.

This sequence in the N-terminal section; belongs to the glycosyltransferase 2 family. The protein in the C-terminal section; belongs to the AcsB/BcsB family.

It localises to the cell inner membrane. It catalyses the reaction [(1-&gt;4)-beta-D-glucosyl](n) + UDP-alpha-D-glucose = [(1-&gt;4)-beta-D-glucosyl](n+1) + UDP + H(+). It functions in the pathway glycan metabolism; bacterial cellulose biosynthesis. This is Putative cellulose synthase 2 (bcsABII-A) from Komagataeibacter xylinus (Gluconacetobacter xylinus).